Reading from the N-terminus, the 633-residue chain is Shootin-1 (633 aa).

At M1 the chain carries N-acetylmethionine. 2 positions are modified to phosphoserine: S3 and S4. A coiled-coil region spans residues 7–353; that stretch reads EKQLQLITSL…RVNQSENSVP (347 aa). 2 positions are modified to phosphoserine; by PAK1: S101 and S249. A disordered region spans residues 343 to 508; sequence KRVNQSENSV…LATSESKSMP (166 aa). Over residues 352–369 the composition is skewed to pro residues; it reads VPPPPPPPPPLPPPPPNP. At S375 the chain carries Phosphoserine. The segment covering 403 to 418 has biased composition (basic and acidic residues); the sequence is TDLKRQAVEEMMDRIK. Polar residues predominate over residues 456–465; the sequence is LNKSTSSRSL. S473 carries the post-translational modification Phosphoserine. The residue at position 487 (T487) is a Phosphothreonine. The segment covering 490–505 has biased composition (polar residues); that stretch reads ADSSSPTGILATSESK. Residue S494 is modified to Phosphoserine. Residue T496 is modified to Phosphothreonine. Phosphoserine occurs at positions 506 and 515. Residues 525–633 form a disordered region; the sequence is TLEAEFNNPC…KTGETDSSNC (109 aa). T537 is modified (phosphothreonine). Residues 550 to 559 are compositionally biased toward polar residues; that stretch reads CTNSKVTFQP. Basic and acidic residues predominate over residues 590–621; the sequence is PQTKDQAAEKDPTQCKEEERGETQPEFKEDSS.

This sequence belongs to the shootin family. As to quaternary structure, interacts with PFN2. Interacts (via N-terminus) with KIF20B; this interaction is direct and promotes the association of SHTN1 to microtubules in primary neurons. Associates with microtubule. Interacts with L1CAM; this interaction occurs in axonal growth cones. Interacts with actin filament retrograde flow; this interaction is enhanced in a netrin-1- and PAK1-dependent manner and promotes F-actin-substrate coupling and concomitant formation of traction forces at axonal growth cones. Interacts with RUFY3. In terms of processing, phosphorylated on Ser-101 and Ser-249 by PAK1 through a CDC42- and RAC1-dependent signaling pathway, which enhances its association with F-actin retrograde flow in filopodia and lamellipodia of axonal growth cones. Phosphorylation on Ser-101 and Ser-249 is increased by netrin-1. As to expression, brain-specific (at protein level). Expressed in hippocampal neurons.

The protein localises to the perikaryon. Its subcellular location is the cell projection. The protein resides in the axon. It localises to the growth cone. It is found in the cytoplasm. The protein localises to the cytoskeleton. Its subcellular location is the filopodium. The protein resides in the lamellipodium. Its function is as follows. Involved in the generation of internal asymmetric signals required for neuronal polarization and neurite outgrowth. Mediates netrin-1-induced F-actin-substrate coupling or 'clutch engagement' within the axon growth cone through activation of CDC42, RAC1 and PAK1-dependent signaling pathway, thereby converting the F-actin retrograde flow into traction forces, concomitantly with filopodium extension and axon outgrowth. Plays a role in cytoskeletal organization by regulating the subcellular localization of phosphoinositide 3-kinase (PI3K) activity at the axonal growth cone. Also plays a role in regenerative neurite outgrowth. In the developing cortex, cooperates with KIF20B to promote both the transition from the multipolar to the bipolar stage and the radial migration of cortical neurons from the ventricular zone toward the superficial layer of the neocortex. Involved in the accumulation of phosphatidylinositol 3,4,5-trisphosphate (PIP3) in the growth cone of primary hippocampal neurons. This chain is Shootin-1, found in Rattus norvegicus (Rat).